Here is a 54-residue protein sequence, read N- to C-terminus: UPF0235 protein in proC 3'region (54 aa).

This sequence belongs to the UPF0235 family.

The protein is UPF0235 protein in proC 3'region of Vibrio alginolyticus.